A 435-amino-acid chain; its full sequence is Protoheme IX farnesyltransferase, mitochondrial (435 aa).

The N-terminal 35 residues, 1-35 (MPALCATYLIHSGNLRACLRIVPLTKPSVVIAYRH), are a transit peptide targeting the mitochondrion. 6 helical membrane-spanning segments follow: residues 135–155 (VLVM…ATVL), 157–177 (LLSL…INMG), 212–232 (GVIG…LLGA), 250–270 (IINT…GWAA), 324–344 (VALR…YYGI), and 401–421 (FWVS…HKKG).

This sequence belongs to the UbiA prenyltransferase family.

It localises to the mitochondrion membrane. In terms of biological role, converts protoheme IX and farnesyl diphosphate to heme O. The chain is Protoheme IX farnesyltransferase, mitochondrial (COX10) from Eremothecium gossypii (strain ATCC 10895 / CBS 109.51 / FGSC 9923 / NRRL Y-1056) (Yeast).